The following is a 330-amino-acid chain: Ferredoxin--NADP reductase (330 aa).

The FAD site is built by Glu35, Gln43, Tyr48, Val90, Phe123, Asp285, and Thr326.

This sequence belongs to the ferredoxin--NADP reductase type 2 family. As to quaternary structure, homodimer. The cofactor is FAD.

It catalyses the reaction 2 reduced [2Fe-2S]-[ferredoxin] + NADP(+) + H(+) = 2 oxidized [2Fe-2S]-[ferredoxin] + NADPH. The sequence is that of Ferredoxin--NADP reductase from Streptococcus pyogenes serotype M28 (strain MGAS6180).